A 149-amino-acid chain; its full sequence is Transcriptional repressor NrdR (149 aa).

A zinc finger spans residues cysteine 3 to cysteine 34. The region spanning proline 49 to glutamine 139 is the ATP-cone domain.

The protein belongs to the NrdR family. Zn(2+) serves as cofactor.

In terms of biological role, negatively regulates transcription of bacterial ribonucleotide reductase nrd genes and operons by binding to NrdR-boxes. This is Transcriptional repressor NrdR from Haemophilus influenzae (strain 86-028NP).